Here is a 271-residue protein sequence, read N- to C-terminus: Acetyl-coenzyme A carboxylase carboxyl transferase subunit alpha (271 aa).

One can recognise a CoA carboxyltransferase C-terminal domain in the interval 1-247 (MSRELIRTAD…KKTILEALGE (247 aa)).

Belongs to the AccA family. In terms of assembly, acetyl-CoA carboxylase is a heterohexamer composed of biotin carboxyl carrier protein (AccB), biotin carboxylase (AccC) and two subunits each of ACCase subunit alpha (AccA) and ACCase subunit beta (AccD).

It localises to the cytoplasm. It carries out the reaction N(6)-carboxybiotinyl-L-lysyl-[protein] + acetyl-CoA = N(6)-biotinyl-L-lysyl-[protein] + malonyl-CoA. It functions in the pathway lipid metabolism; malonyl-CoA biosynthesis; malonyl-CoA from acetyl-CoA: step 1/1. Functionally, component of the acetyl coenzyme A carboxylase (ACC) complex. First, biotin carboxylase catalyzes the carboxylation of biotin on its carrier protein (BCCP) and then the CO(2) group is transferred by the carboxyltransferase to acetyl-CoA to form malonyl-CoA. The sequence is that of Acetyl-coenzyme A carboxylase carboxyl transferase subunit alpha from Clostridium perfringens (strain ATCC 13124 / DSM 756 / JCM 1290 / NCIMB 6125 / NCTC 8237 / Type A).